The chain runs to 226 residues: Calcium-binding protein 1 (226 aa).

The N-myristoyl glycine moiety is linked to residue G2. Residue C4 is the site of S-palmitoyl cysteine attachment. EF-hand domains follow at residues 81 to 116 (EEIEELREAFREFDKDKDGYINCRDLGNCMRTMGYM), 135 to 152 (GHVDFDDFVELMGPKLLA), 158 to 193 (IGVKELRDAFREFDTNGDGEISTSELREAMRKLLGH), and 195 to 226 (VGHRDIEEIIRDVDLNGDGRVDFEEFVRMMSR). Residues D94, D96, D98, Y100, and D105 each contribute to the Ca(2+) site. 4 residues coordinate Ca(2+): D171, N173, D175, and E177. Residue S179 is modified to Phosphoserine. Residues E182, D208, N210, D212, R214, and E219 each coordinate Ca(2+).

As to quaternary structure, homodimer. Interacts (via C-terminus) with ITPR1, ITPR2 and ITPR3. This binding is calcium dependent and the interaction correlates with calcium concentration. An additional calcium-independent interaction with the N-terminus of ITPR1 results in a decreased InsP(3) binding to the receptor. Interacts with CACNA1A (via C-terminal CDB motif) in the pre- and postsynaptic membranes. Interacts with CACNA1C (via C-terminal C and IQ motifs). Interacts with CACNA1D. The binding to the C motif is calcium independent whereas the binding to IQ requires the presence of calcium and is mutually exclusive with calmodulin binding. Interacts with TRPC5 (via C-terminus). Interacts (via EF-hands 1 and 2) at microtubules with MAP1LC3B. Interacts with MYO1C. Interacts (via EF-hands 1 and 2) with NSMF (via the central NLS-containing motif region), the interaction occurs in a calcium dependent manner after synaptic NMDA receptor stimulation and prevents nuclear import of NSMF. Interacts with SPACA9. In terms of processing, phosphorylated. The phosphorylation regulates the activity.

The protein resides in the cytoplasm. The protein localises to the cytoskeleton. Its subcellular location is the perinuclear region. It localises to the cell membrane. It is found in the golgi apparatus. The protein resides in the postsynaptic density. In terms of biological role, modulates calcium-dependent activity of inositol 1,4,5-triphosphate receptors (ITPRs). Inhibits agonist-induced intracellular calcium signaling. Enhances inactivation and does not support calcium-dependent facilitation of voltage-dependent P/Q-type calcium channels. Causes calcium-dependent facilitation and inhibits inactivation of L-type calcium channels by binding to the same sites as calmodulin in the C-terminal domain of CACNA1C, but has an opposite effect on channel function. Suppresses the calcium-dependent inactivation of CACNA1D. Inhibits TRPC5 channels. Prevents NMDA receptor-induced cellular degeneration. Required for the normal transfer of light signals through the retina. In Bos taurus (Bovine), this protein is Calcium-binding protein 1 (CABP1).